The sequence spans 174 residues: Mytilin-3 (174 aa).

Residues 1–16 form the signal peptide; that stretch reads MLKGIILIVTIQLVNA.

As to expression, component of the organic matrix of calcified shell layers like nacre and prisms.

The protein resides in the secreted. This chain is Mytilin-3, found in Mytilus californianus (California mussel).